The primary structure comprises 527 residues: ATP synthase subunit alpha (527 aa).

169–176 (GDRQTGKT) contributes to the ATP binding site.

It belongs to the ATPase alpha/beta chains family. F-type ATPases have 2 components, CF(1) - the catalytic core - and CF(0) - the membrane proton channel. CF(1) has five subunits: alpha(3), beta(3), gamma(1), delta(1), epsilon(1). CF(0) has three main subunits: a(1), b(2) and c(9-12). The alpha and beta chains form an alternating ring which encloses part of the gamma chain. CF(1) is attached to CF(0) by a central stalk formed by the gamma and epsilon chains, while a peripheral stalk is formed by the delta and b chains.

It localises to the cell membrane. It carries out the reaction ATP + H2O + 4 H(+)(in) = ADP + phosphate + 5 H(+)(out). Its function is as follows. Produces ATP from ADP in the presence of a proton gradient across the membrane. The alpha chain is a regulatory subunit. The protein is ATP synthase subunit alpha of Metamycoplasma arthritidis (strain 158L3-1) (Mycoplasma arthritidis).